The following is a 257-amino-acid chain: 1-(5-phosphoribosyl)-5-[(5-phosphoribosylamino)methylideneamino] imidazole-4-carboxamide isomerase (257 aa).

The active-site Proton acceptor is the D8. The active-site Proton donor is D129.

The protein belongs to the HisA/HisF family.

It localises to the cytoplasm. It carries out the reaction 1-(5-phospho-beta-D-ribosyl)-5-[(5-phospho-beta-D-ribosylamino)methylideneamino]imidazole-4-carboxamide = 5-[(5-phospho-1-deoxy-D-ribulos-1-ylimino)methylamino]-1-(5-phospho-beta-D-ribosyl)imidazole-4-carboxamide. Its pathway is amino-acid biosynthesis; L-histidine biosynthesis; L-histidine from 5-phospho-alpha-D-ribose 1-diphosphate: step 4/9. The polypeptide is 1-(5-phosphoribosyl)-5-[(5-phosphoribosylamino)methylideneamino] imidazole-4-carboxamide isomerase (Nostoc punctiforme (strain ATCC 29133 / PCC 73102)).